We begin with the raw amino-acid sequence, 269 residues long: Putative pyruvate, phosphate dikinase regulatory protein (269 aa).

151–158 serves as a coordination point for ADP; that stretch reads GVSRSSKT.

It belongs to the pyruvate, phosphate/water dikinase regulatory protein family. PDRP subfamily.

The enzyme catalyses N(tele)-phospho-L-histidyl/L-threonyl-[pyruvate, phosphate dikinase] + ADP = N(tele)-phospho-L-histidyl/O-phospho-L-threonyl-[pyruvate, phosphate dikinase] + AMP + H(+). The catalysed reaction is N(tele)-phospho-L-histidyl/O-phospho-L-threonyl-[pyruvate, phosphate dikinase] + phosphate + H(+) = N(tele)-phospho-L-histidyl/L-threonyl-[pyruvate, phosphate dikinase] + diphosphate. In terms of biological role, bifunctional serine/threonine kinase and phosphorylase involved in the regulation of the pyruvate, phosphate dikinase (PPDK) by catalyzing its phosphorylation/dephosphorylation. The chain is Putative pyruvate, phosphate dikinase regulatory protein from Geobacter metallireducens (strain ATCC 53774 / DSM 7210 / GS-15).